Here is a 485-residue protein sequence, read N- to C-terminus: GTPase Der (485 aa).

2 consecutive EngA-type G domains span residues 3–167 (PTIA…PEPE) and 176–349 (PVFA…NAAM). Residues 9 to 16 (GRPNVGKS), 56 to 60 (DTGGF), 119 to 122 (NKGE), 182 to 189 (GRPNVGKS), 229 to 233 (DTAGV), and 294 to 297 (NKWD) each bind GTP. The KH-like domain maps to 350-434 (IKMPTPKITR…PLRIQYNVSE (85 aa)). Residues 435 to 485 (NPYENAEDKPKKKPLRRVSLSNRIEKREGRKEEKNRFKKKTKVSVKKQFSK) are disordered. Basic and acidic residues predominate over residues 457–469 (RIEKREGRKEEKN). Residues 470–485 (RFKKKTKVSVKKQFSK) are compositionally biased toward basic residues.

It belongs to the TRAFAC class TrmE-Era-EngA-EngB-Septin-like GTPase superfamily. EngA (Der) GTPase family. As to quaternary structure, associates with the 50S ribosomal subunit.

In terms of biological role, GTPase that plays an essential role in the late steps of ribosome biogenesis. This Neisseria meningitidis serogroup B (strain ATCC BAA-335 / MC58) protein is GTPase Der.